The primary structure comprises 445 residues: Gamma conglutin 2 (445 aa).

The N-terminal stretch at 1 to 33 is a signal peptide; sequence MAQNMAPIFHFIAISLSCSFLFVLSSSQDSQSL. The Peptidase A1 domain occupies 60–425; it reads HWANIHKRTP…DFAKSRVEFN (366 aa). Intrachain disulfides connect Cys-88/Cys-178, Cys-102/Cys-115, Cys-107/Cys-133, Cys-118/Cys-128, and Cys-346/Cys-387. N-linked (GlcNAc...) asparagine glycosylation occurs at Asn-130.

The protein belongs to the peptidase A1 family. Two-subunit monomeric unit made of alpha and beta subunits coupled by disulfide bonds (at pH 4.5 and under non-reducing conditions). Can also form oligomers including dimer, tetramer and cyclic hexamer (trimer of dimers) (at pH &gt; 5.5). Component of globulins complexes which accumulate in seeds. Interacts with flavonoids (e.g. apigenin glucosides) present in globulins complexes. Glycosylated on alpha chain.

The protein resides in the secreted. It localises to the extracellular space. Functionally, sulfur-rich seed storage protein that remains undegraded at germination. The protein is Gamma conglutin 2 of Lupinus angustifolius (Narrow-leaved blue lupine).